The primary structure comprises 228 residues: Octanoyltransferase (228 aa).

The BPL/LPL catalytic domain occupies 32 to 214 (DVVPDTVLLV…HLRRLFERDW (183 aa)). Substrate contacts are provided by residues 77 to 84 (RGGDVTYH), 144 to 146 (SVG), and 157 to 159 (GIA). C175 functions as the Acyl-thioester intermediate in the catalytic mechanism.

Belongs to the LipB family.

The protein resides in the cytoplasm. The catalysed reaction is octanoyl-[ACP] + L-lysyl-[protein] = N(6)-octanoyl-L-lysyl-[protein] + holo-[ACP] + H(+). Its pathway is protein modification; protein lipoylation via endogenous pathway; protein N(6)-(lipoyl)lysine from octanoyl-[acyl-carrier-protein]: step 1/2. Its function is as follows. Catalyzes the transfer of endogenously produced octanoic acid from octanoyl-acyl-carrier-protein onto the lipoyl domains of lipoate-dependent enzymes. Lipoyl-ACP can also act as a substrate although octanoyl-ACP is likely to be the physiological substrate. This is Octanoyltransferase from Syntrophobacter fumaroxidans (strain DSM 10017 / MPOB).